The primary structure comprises 217 residues: Large ribosomal subunit protein uL1 (217 aa).

Ser-2 is subject to N-acetylserine. Tyr-11 bears the Phosphotyrosine mark. 2 positions are modified to N6-acetyllysine: Lys-91 and Lys-106. Lys-118 is subject to N6-acetyllysine; alternate. Lys-118 is covalently cross-linked (Glycyl lysine isopeptide (Lys-Gly) (interchain with G-Cter in SUMO1); alternate). Residue Lys-118 forms a Glycyl lysine isopeptide (Lys-Gly) (interchain with G-Cter in SUMO2); alternate linkage.

This sequence belongs to the universal ribosomal protein uL1 family. Component of the large ribosomal subunit.

It localises to the cytoplasm. Functionally, component of the large ribosomal subunit. The ribosome is a large ribonucleoprotein complex responsible for the synthesis of proteins in the cell. The polypeptide is Large ribosomal subunit protein uL1 (RPL10A) (Macaca fascicularis (Crab-eating macaque)).